Consider the following 271-residue polypeptide: Aminoglycoside N(3)-acetyltransferase III (271 aa).

CoA is bound by residues H31, A32, S33, V34, and K35. Y64, D72, and E102 together coordinate a 2-deoxystreptamine antibiotic. Positions 104, 105, and 109 each coordinate CoA. Residues E123, Y146, and D170 each coordinate a 2-deoxystreptamine antibiotic. T171 and T173 together coordinate CoA. Residues H176, T212, G213, and F221 each coordinate a 2-deoxystreptamine antibiotic.

The protein belongs to the antibiotic N-acetyltransferase family. As to quaternary structure, homodimer.

The enzyme catalyses a 2-deoxystreptamine antibiotic + acetyl-CoA = an N(3)-acetyl-2-deoxystreptamine antibiotic + CoA + H(+). Resistance to antibiotics containing the 2-deoxy-streptamine ring including dibekacin, gentamicin, kanamycin, sisomicin, tobramycin and neomycin, but not to amikacin or netilmicin. Acetylates a broad range of both 4,5- and 4,6-disubstituted aminoglycosides, including neomycin, paromomycin, ribostamycin, sisomicin, gentamicin, tobramycin and kanamycin, with no preference of one disubstitution over the other. Acetylates sisomicin and kanamycin most and least efficiently, respectively. Does not modify plazomicin. In Pseudomonas aeruginosa, this protein is Aminoglycoside N(3)-acetyltransferase III.